Here is a 69-residue protein sequence, read N- to C-terminus: Cytochrome c oxidase subunit 8A, mitochondrial (69 aa).

A mitochondrion-targeting transit peptide spans 1–25 (MSVLTPLLLRGLTGPARRLPVPRAQ). The SIFI-degron signature appears at 2 to 19 (SVLTPLLLRGLTGPARRL). Topologically, residues 26-36 (IHSKPPREQLG) are mitochondrial matrix. A helical membrane pass occupies residues 37 to 60 (TMDIAIGLTSCFLCFLLPSGWVLS). Topologically, residues 61 to 69 (HMENYKKRE) are mitochondrial intermembrane.

This sequence belongs to the cytochrome c oxidase VIII family. As to quaternary structure, component of the cytochrome c oxidase (complex IV, CIV), a multisubunit enzyme composed of 14 subunits. The complex is composed of a catalytic core of 3 subunits MT-CO1, MT-CO2 and MT-CO3, encoded in the mitochondrial DNA, and 11 supernumerary subunits COX4I1 (or COX4I2), COX5A, COX5B, COX6A2 (or COX6A1), COX6B1 (or COX6B2), COX6C, COX7A1 (or COX7A2), COX7B, COX7C, COX8B and NDUFA4, which are encoded in the nuclear genome. The complex exists as a monomer or a dimer and forms supercomplexes (SCs) in the inner mitochondrial membrane with NADH-ubiquinone oxidoreductase (complex I, CI) and ubiquinol-cytochrome c oxidoreductase (cytochrome b-c1 complex, complex III, CIII), resulting in different assemblies (supercomplex SCI(1)III(2)IV(1) and megacomplex MCI(2)III(2)IV(2)). In response to mitochondrial stress, the precursor protein is ubiquitinated by the SIFI complex in the cytoplasm before mitochondrial import, leading to its degradation. Within the SIFI complex, UBR4 initiates ubiquitin chain that are further elongated or branched by KCMF1.

The protein localises to the mitochondrion inner membrane. It functions in the pathway energy metabolism; oxidative phosphorylation. Component of the cytochrome c oxidase, the last enzyme in the mitochondrial electron transport chain which drives oxidative phosphorylation. The respiratory chain contains 3 multisubunit complexes succinate dehydrogenase (complex II, CII), ubiquinol-cytochrome c oxidoreductase (cytochrome b-c1 complex, complex III, CIII) and cytochrome c oxidase (complex IV, CIV), that cooperate to transfer electrons derived from NADH and succinate to molecular oxygen, creating an electrochemical gradient over the inner membrane that drives transmembrane transport and the ATP synthase. Cytochrome c oxidase is the component of the respiratory chain that catalyzes the reduction of oxygen to water. Electrons originating from reduced cytochrome c in the intermembrane space (IMS) are transferred via the dinuclear copper A center (CU(A)) of subunit 2 and heme A of subunit 1 to the active site in subunit 1, a binuclear center (BNC) formed by heme A3 and copper B (CU(B)). The BNC reduces molecular oxygen to 2 water molecules using 4 electrons from cytochrome c in the IMS and 4 protons from the mitochondrial matrix. The sequence is that of Cytochrome c oxidase subunit 8A, mitochondrial (COX8A) from Bos taurus (Bovine).